We begin with the raw amino-acid sequence, 75 residues long: U6-lycotoxin-Ls1f (75 aa).

The first 21 residues, 1 to 21 (MKLLLFTALVLVVISLVEVEA), serve as a signal peptide directing secretion. A propeptide spanning residues 22–25 (ENER) is cleaved from the precursor.

Belongs to the neurotoxin 19 (CSTX) family. 06 (U6-Lctx) subfamily. In terms of processing, contains 4 disulfide bonds. In terms of tissue distribution, expressed by the venom gland.

The protein resides in the secreted. The polypeptide is U6-lycotoxin-Ls1f (Lycosa singoriensis (Wolf spider)).